The primary structure comprises 68 residues: ATP synthase F(0) complex subunit 8 (68 aa).

Residues 8 to 21 traverse the membrane as a helical segment; it reads VWPTMITPMLLTLF. N6-acetyllysine; alternate is present on K54. N6-succinyllysine; alternate is present on K54. Position 57 is an N6-acetyllysine (K57).

The protein belongs to the ATPase protein 8 family. Component of the ATP synthase complex composed at least of ATP5F1A/subunit alpha, ATP5F1B/subunit beta, ATP5MC1/subunit c (homooctomer), MT-ATP6/subunit a, MT-ATP8/subunit 8, ATP5ME/subunit e, ATP5MF/subunit f, ATP5MG/subunit g, ATP5MK/subunit k, ATP5MJ/subunit j, ATP5F1C/subunit gamma, ATP5F1D/subunit delta, ATP5F1E/subunit epsilon, ATP5PF/subunit F6, ATP5PB/subunit b, ATP5PD/subunit d, ATP5PO/subunit OSCP. ATP synthase complex consists of a soluble F(1) head domain (subunits alpha(3) and beta(3)) - the catalytic core - and a membrane F(0) domain - the membrane proton channel (subunits c, a, 8, e, f, g, k and j). These two domains are linked by a central stalk (subunits gamma, delta, and epsilon) rotating inside the F1 region and a stationary peripheral stalk (subunits F6, b, d, and OSCP). Interacts with PRICKLE3.

The protein resides in the mitochondrion membrane. Subunit 8, of the mitochondrial membrane ATP synthase complex (F(1)F(0) ATP synthase or Complex V) that produces ATP from ADP in the presence of a proton gradient across the membrane which is generated by electron transport complexes of the respiratory chain. ATP synthase complex consist of a soluble F(1) head domain - the catalytic core - and a membrane F(1) domain - the membrane proton channel. These two domains are linked by a central stalk rotating inside the F(1) region and a stationary peripheral stalk. During catalysis, ATP synthesis in the catalytic domain of F(1) is coupled via a rotary mechanism of the central stalk subunits to proton translocation. In vivo, can only synthesize ATP although its ATP hydrolase activity can be activated artificially in vitro. Part of the complex F(0) domain. In Homo sapiens (Human), this protein is ATP synthase F(0) complex subunit 8.